The following is a 491-amino-acid chain: Cytochrome P450 2H1 (491 aa).

Position 436 (Cys-436) interacts with heme.

Belongs to the cytochrome P450 family. It depends on heme as a cofactor. Expressed in liver.

Its subcellular location is the endoplasmic reticulum membrane. The protein resides in the microsome membrane. It carries out the reaction an organic molecule + reduced [NADPH--hemoprotein reductase] + O2 = an alcohol + oxidized [NADPH--hemoprotein reductase] + H2O + H(+). In terms of biological role, cytochromes P450 are a group of heme-thiolate monooxygenases. In liver microsomes, this enzyme is involved in an NADPH-dependent electron transport pathway. It oxidizes a variety of structurally unrelated compounds, including steroids, fatty acids, and xenobiotics. This is Cytochrome P450 2H1 (CYP2H1) from Gallus gallus (Chicken).